A 178-amino-acid polypeptide reads, in one-letter code: ATP synthase subunit b (178 aa).

Residues 11–31 (IIPEPVEIVVGLVAFLLLLFV) form a helical membrane-spanning segment.

The protein belongs to the ATPase B chain family. F-type ATPases have 2 components, F(1) - the catalytic core - and F(0) - the membrane proton channel. F(1) has five subunits: alpha(3), beta(3), gamma(1), delta(1), epsilon(1). F(0) has three main subunits: a(1), b(2) and c(10-14). The alpha and beta chains form an alternating ring which encloses part of the gamma chain. F(1) is attached to F(0) by a central stalk formed by the gamma and epsilon chains, while a peripheral stalk is formed by the delta and b chains.

It is found in the cell membrane. In terms of biological role, f(1)F(0) ATP synthase produces ATP from ADP in the presence of a proton or sodium gradient. F-type ATPases consist of two structural domains, F(1) containing the extramembraneous catalytic core and F(0) containing the membrane proton channel, linked together by a central stalk and a peripheral stalk. During catalysis, ATP synthesis in the catalytic domain of F(1) is coupled via a rotary mechanism of the central stalk subunits to proton translocation. Functionally, component of the F(0) channel, it forms part of the peripheral stalk, linking F(1) to F(0). The chain is ATP synthase subunit b from Saccharopolyspora erythraea (strain ATCC 11635 / DSM 40517 / JCM 4748 / NBRC 13426 / NCIMB 8594 / NRRL 2338).